The primary structure comprises 386 residues: Leupaxin (386 aa).

M1 is subject to N-acetylmethionine. An LD motif 1 motif is present at residues 3 to 15 (ELDALLEELERST). Residues 13-41 (RSTLQDSDEYSNPAPLPLDQHSRKETNLD) are disordered. Position 19 is a phosphoserine (S19). A Phosphotyrosine modification is found at Y22. A Phosphoserine modification is found at S54. Y62 bears the Phosphotyrosine mark. 2 short sequence motifs (LD motif) span residues 70-82 (NVYSEAQEPKESP) and 92-103 (QLDELMAHLTEM). Phosphotyrosine; by LYN is present on Y72. S81 is subject to Phosphoserine. LIM zinc-binding domains are found at residues 150-208 (GHCA…QLFS), 209-267 (PRCA…AMFS), 268-326 (PKCG…HRRG), and 327-386 (TLCH…LFPL).

Belongs to the paxillin family. In terms of assembly, interacts with PTPN22. Interacts with unphosphorylated ITGA4. Interacts with PTK2B/PYK2, PTPN12, AR and SRF. Interacts (via LD motif 3) with LYN and the interaction is induced upon B-cell antigen receptor (BCR) activation. Interacts (via LD motif 3) with PTK2/FAK. Phosphorylated on tyrosine residues. Phosphorylation on Tyr-72 is important for its inhibitory function. Bombesin stimulates phosphorylation on Tyr-22, Tyr-62 and Tyr-72. Macrophages, monocytes and osteoclasts (at protein level). Strongly expressed in cells and tissues of hematopoietic origin. Highest expression in lymphoid tissues such as spleen, lymph node, thymus and appendix and in the vascular smooth muscle. Lower levels in bone marrow and fetal liver. Also expressed in peripheral blood lymphocytes and a number of hematopoietic cell lines. Very low levels found in epithelial cell lines. Expressed in prostate cancer (PCa) cells and its expression intensity is directly linked to PCa progression.

The protein localises to the cytoplasm. It is found in the cell junction. It localises to the focal adhesion. Its subcellular location is the nucleus. The protein resides in the perinuclear region. The protein localises to the cell projection. It is found in the podosome. It localises to the cell membrane. In terms of biological role, transcriptional coactivator for androgen receptor (AR) and serum response factor (SRF). Contributes to the regulation of cell adhesion, spreading and cell migration and acts as a negative regulator in integrin-mediated cell adhesion events. Suppresses the integrin-induced tyrosine phosphorylation of paxillin (PXN). May play a critical role as an adapter protein in the formation of the adhesion zone in osteoclasts. Negatively regulates B-cell antigen receptor (BCR) signaling. The sequence is that of Leupaxin (LPXN) from Homo sapiens (Human).